Here is a 568-residue protein sequence, read N- to C-terminus: Potassium-transporting ATPase potassium-binding subunit (568 aa).

12 consecutive transmembrane segments (helical) span residues 7–27 (LLIT…GNII), 67–87 (YALA…TLLV), 137–157 (GLTV…FALI), 180–200 (LYLL…QGVI), 258–278 (FIQI…FGQV), 288–308 (LLWA…YAEL), 332–352 (FGIL…CGAV), 361–381 (ALGG…FGGV), 384–404 (GLYG…LMIG), 421–441 (MVAL…ALTI), 488–508 (LLLA…VLAI), and 535–555 (LLIL…LILG).

Belongs to the KdpA family. In terms of assembly, the system is composed of three essential subunits: KdpA, KdpB and KdpC.

Its subcellular location is the cell inner membrane. Its function is as follows. Part of the high-affinity ATP-driven potassium transport (or Kdp) system, which catalyzes the hydrolysis of ATP coupled with the electrogenic transport of potassium into the cytoplasm. This subunit binds the periplasmic potassium ions and delivers the ions to the membrane domain of KdpB through an intramembrane tunnel. This is Potassium-transporting ATPase potassium-binding subunit from Photorhabdus laumondii subsp. laumondii (strain DSM 15139 / CIP 105565 / TT01) (Photorhabdus luminescens subsp. laumondii).